Reading from the N-terminus, the 138-residue chain is 18 kDa antigen 2 (138 aa).

The sHSP domain occupies 21–131 (GTRRPAVMPM…KPRRIEINHN (111 aa)).

Belongs to the small heat shock protein (HSP20) family.

Not known. This protein is one of the major immune reactive proteins in mycobacteria. This Mycobacterium avium protein is 18 kDa antigen 2.